The sequence spans 484 residues: ATP synthase subunit beta (484 aa).

Residue 162 to 169 (GGAGVGKT) participates in ATP binding.

This sequence belongs to the ATPase alpha/beta chains family. In terms of assembly, F-type ATPases have 2 components, CF(1) - the catalytic core - and CF(0) - the membrane proton channel. CF(1) has five subunits: alpha(3), beta(3), gamma(1), delta(1), epsilon(1). CF(0) has three main subunits: a(1), b(2) and c(9-12). The alpha and beta chains form an alternating ring which encloses part of the gamma chain. CF(1) is attached to CF(0) by a central stalk formed by the gamma and epsilon chains, while a peripheral stalk is formed by the delta and b chains.

It localises to the cell inner membrane. The catalysed reaction is ATP + H2O + 4 H(+)(in) = ADP + phosphate + 5 H(+)(out). Produces ATP from ADP in the presence of a proton gradient across the membrane. The catalytic sites are hosted primarily by the beta subunits. The chain is ATP synthase subunit beta from Agrobacterium fabrum (strain C58 / ATCC 33970) (Agrobacterium tumefaciens (strain C58)).